The chain runs to 364 residues: DNA replication and repair protein RecF (364 aa).

Residue 30–37 (GNNAQGKT) participates in ATP binding.

Belongs to the RecF family.

Its subcellular location is the cytoplasm. The RecF protein is involved in DNA metabolism; it is required for DNA replication and normal SOS inducibility. RecF binds preferentially to single-stranded, linear DNA. It also seems to bind ATP. The polypeptide is DNA replication and repair protein RecF (Clostridium botulinum (strain 657 / Type Ba4)).